A 208-amino-acid chain; its full sequence is Small ribosomal subunit protein uS2 (208 aa).

The disordered stretch occupies residues 189 to 208; the sequence is KPDQDLPVPPEEFETRLVQT.

The protein belongs to the universal ribosomal protein uS2 family.

The protein is Small ribosomal subunit protein uS2 of Pyrobaculum arsenaticum (strain DSM 13514 / JCM 11321 / PZ6).